The sequence spans 390 residues: Ureide permease 1 (390 aa).

The Extracellular portion of the chain corresponds to methionine 1–glycine 9. A helical membrane pass occupies residues alanine 10–leucine 30. Residues threonine 31–aspartate 44 lie on the Cytoplasmic side of the membrane. Residues tyrosine 45 to proline 65 form a helical membrane-spanning segment. Over serine 66–asparagine 78 the chain is Extracellular. A helical transmembrane segment spans residues tryptophan 79–threonine 99. Topologically, residues glutamine 100–tyrosine 101 are cytoplasmic. The helical transmembrane segment at alanine 102–isoleucine 122 threads the bilayer. The Extracellular segment spans residues glycine 123 to arginine 136. A helical membrane pass occupies residues alanine 137–valine 157. The Cytoplasmic segment spans residues histidine 158 to threonine 221. Alanine 213 to serine 220 is an ATP binding site. A helical membrane pass occupies residues isoleucine 222–phenylalanine 242. At asparagine 243–asparagine 261 the chain is on the extracellular side. Residues valine 262–isoleucine 282 form a helical membrane-spanning segment. At arginine 283 to arginine 307 the chain is on the cytoplasmic side. The chain crosses the membrane as a helical span at residues glycine 308–glycine 328. The Extracellular segment spans residues glutamine 329–tyrosine 333. Residues alanine 334–phenylalanine 354 traverse the membrane as a helical segment. The Cytoplasmic portion of the chain corresponds to glycine 355–lysine 363. Residues threonine 364–alanine 384 traverse the membrane as a helical segment. The Extracellular portion of the chain corresponds to serine 385 to lysine 390.

Belongs to the plant ureide permease (TC 2.A.7.19) family. In terms of tissue distribution, expressed in leaves, flowers, roots and stems.

Its subcellular location is the membrane. Its function is as follows. Proton-coupled transporter that transports a wide spectrum of oxo derivatives of heterocyclic nitrogen compounds, including allantoin, uric acid and xanthine, but not adenine. Mediates high affinity transport of uracil and 5-fluorouracil (a toxic uracil analog). Mediates transport of free pyrimidines and may function during early seedling development in salvage pathways, by the utilization of pyrimidines from seed storage tissue. This chain is Ureide permease 1, found in Arabidopsis thaliana (Mouse-ear cress).